Consider the following 130-residue polypeptide: Glycine cleavage system H protein (130 aa).

The Lipoyl-binding domain maps to 24 to 106 (IYSVGITEHA…YADGWLFRIR (83 aa)). Lysine 65 is modified (N6-lipoyllysine).

The protein belongs to the GcvH family. The glycine cleavage system is composed of four proteins: P, T, L and H. (R)-lipoate serves as cofactor.

Its function is as follows. The glycine cleavage system catalyzes the degradation of glycine. The H protein shuttles the methylamine group of glycine from the P protein to the T protein. The protein is Glycine cleavage system H protein of Pectobacterium carotovorum subsp. carotovorum (strain PC1).